A 364-amino-acid polypeptide reads, in one-letter code: Aminomethyltransferase (364 aa).

This sequence belongs to the GcvT family. In terms of assembly, the glycine cleavage system is composed of four proteins: P, T, L and H.

It carries out the reaction N(6)-[(R)-S(8)-aminomethyldihydrolipoyl]-L-lysyl-[protein] + (6S)-5,6,7,8-tetrahydrofolate = N(6)-[(R)-dihydrolipoyl]-L-lysyl-[protein] + (6R)-5,10-methylene-5,6,7,8-tetrahydrofolate + NH4(+). Functionally, the glycine cleavage system catalyzes the degradation of glycine. The sequence is that of Aminomethyltransferase from Shewanella sp. (strain MR-4).